Reading from the N-terminus, the 260-residue chain is Ribosome maturation factor RimP (260 aa).

2 stretches are compositionally biased toward basic and acidic residues: residues 189 to 199 (RRGRDAEREQL) and 215 to 227 (AREM…PRKE). The segment at 189–260 (RRGRDAEREQ…QTTSDPHQGE (72 aa)) is disordered. The span at 228–242 (KTAKKPLPKNTKAHR) shows a compositional bias: basic residues.

This sequence belongs to the RimP family.

It localises to the cytoplasm. Required for maturation of 30S ribosomal subunits. In Afipia carboxidovorans (strain ATCC 49405 / DSM 1227 / KCTC 32145 / OM5) (Oligotropha carboxidovorans), this protein is Ribosome maturation factor RimP.